Consider the following 415-residue polypeptide: Tyrosine--tRNA ligase (415 aa).

Residue tyrosine 34 participates in L-tyrosine binding. Residues 39–48 carry the 'HIGH' region motif; sequence PSADSLHLGN. Residues tyrosine 162 and glutamine 166 each contribute to the L-tyrosine site. Positions 224-228 match the 'KMSKS' region motif; sequence KFGKS. Lysine 227 contributes to the ATP binding site. The 68-residue stretch at 346-413 folds into the S4 RNA-binding domain; that stretch reads IKIIDLLNLA…KRNYFLIVWN (68 aa).

This sequence belongs to the class-I aminoacyl-tRNA synthetase family. TyrS type 1 subfamily. Homodimer.

It is found in the cytoplasm. It carries out the reaction tRNA(Tyr) + L-tyrosine + ATP = L-tyrosyl-tRNA(Tyr) + AMP + diphosphate + H(+). Functionally, catalyzes the attachment of tyrosine to tRNA(Tyr) in a two-step reaction: tyrosine is first activated by ATP to form Tyr-AMP and then transferred to the acceptor end of tRNA(Tyr). This Ureaplasma urealyticum serovar 10 (strain ATCC 33699 / Western) protein is Tyrosine--tRNA ligase.